Reading from the N-terminus, the 75-residue chain is uncharacterized protein (75 aa).

The signal sequence occupies residues 1-25; the sequence is MSLFYRAVALGTLSALVWYSTSILA. The chain crosses the membrane as a helical span at residues 55 to 75; that stretch reads YRALLAFSLVICGTLLVTCVI.

It localises to the host endoplasmic reticulum membrane. Its function is as follows. Plays a role in the down-regulation of the host NKG2D ligand MICA by targeting ER-resident MICA to proteasomal degradation prior to the GPI-anchoring step. In turn, MICA reduction diminishes NK-cell killing of HCMV-infected cells. This is an uncharacterized protein from Homo sapiens (Human).